Reading from the N-terminus, the 436-residue chain is 3-ketoacyl-CoA thiolase (436 aa).

The active-site Acyl-thioester intermediate is the Cys-99. Active-site proton acceptor residues include His-392 and Cys-422.

It belongs to the thiolase-like superfamily. Thiolase family. In terms of assembly, heterotetramer of two alpha chains (FadJ) and two beta chains (FadI).

The protein resides in the cytoplasm. The catalysed reaction is an acyl-CoA + acetyl-CoA = a 3-oxoacyl-CoA + CoA. It participates in lipid metabolism; fatty acid beta-oxidation. In terms of biological role, catalyzes the final step of fatty acid oxidation in which acetyl-CoA is released and the CoA ester of a fatty acid two carbons shorter is formed. This Shigella dysenteriae serotype 1 (strain Sd197) protein is 3-ketoacyl-CoA thiolase.